A 128-amino-acid chain; its full sequence is Aspartate 1-decarboxylase (128 aa).

The active-site Schiff-base intermediate with substrate; via pyruvic acid is the S25. At S25 the chain carries Pyruvic acid (Ser). Residue T57 coordinates substrate. The active-site Proton donor is Y58. Residue 73–75 (GSA) coordinates substrate.

This sequence belongs to the PanD family. Heterooctamer of four alpha and four beta subunits. It depends on pyruvate as a cofactor. Is synthesized initially as an inactive proenzyme, which is activated by self-cleavage at a specific serine bond to produce a beta-subunit with a hydroxyl group at its C-terminus and an alpha-subunit with a pyruvoyl group at its N-terminus.

It is found in the cytoplasm. The catalysed reaction is L-aspartate + H(+) = beta-alanine + CO2. It participates in cofactor biosynthesis; (R)-pantothenate biosynthesis; beta-alanine from L-aspartate: step 1/1. Its function is as follows. Catalyzes the pyruvoyl-dependent decarboxylation of aspartate to produce beta-alanine. The sequence is that of Aspartate 1-decarboxylase from Burkholderia thailandensis (strain ATCC 700388 / DSM 13276 / CCUG 48851 / CIP 106301 / E264).